Consider the following 148-residue polypeptide: Transcriptional regulator MraZ (148 aa).

2 consecutive SpoVT-AbrB domains span residues 5-53 (ETAI…AESE) and 82-125 (AAHL…SEQA).

This sequence belongs to the MraZ family. In terms of assembly, forms oligomers.

It localises to the cytoplasm. The protein localises to the nucleoid. This chain is Transcriptional regulator MraZ, found in Stenotrophomonas maltophilia (strain R551-3).